The chain runs to 349 residues: Phosphoribosylformylglycinamidine cyclo-ligase (349 aa).

It belongs to the AIR synthase family.

It localises to the cytoplasm. It carries out the reaction 2-formamido-N(1)-(5-O-phospho-beta-D-ribosyl)acetamidine + ATP = 5-amino-1-(5-phospho-beta-D-ribosyl)imidazole + ADP + phosphate + H(+). It functions in the pathway purine metabolism; IMP biosynthesis via de novo pathway; 5-amino-1-(5-phospho-D-ribosyl)imidazole from N(2)-formyl-N(1)-(5-phospho-D-ribosyl)glycinamide: step 2/2. This is Phosphoribosylformylglycinamidine cyclo-ligase from Lactobacillus delbrueckii subsp. bulgaricus (strain ATCC BAA-365 / Lb-18).